The following is a 183-amino-acid chain: Bifunctional protein PyrR (183 aa).

Residues 100 to 112 (VILVDDVLYTGRT) carry the PRPP-binding motif.

Belongs to the purine/pyrimidine phosphoribosyltransferase family. PyrR subfamily.

The catalysed reaction is UMP + diphosphate = 5-phospho-alpha-D-ribose 1-diphosphate + uracil. Its function is as follows. Regulates the transcription of the pyrimidine nucleotide (pyr) operon in response to exogenous pyrimidines. Also displays a weak uracil phosphoribosyltransferase activity which is not physiologically significant. The protein is Bifunctional protein PyrR of Deinococcus deserti (strain DSM 17065 / CIP 109153 / LMG 22923 / VCD115).